Here is a 500-residue protein sequence, read N- to C-terminus: Glycerol kinase (500 aa).

Residue threonine 11 coordinates ADP. Residues threonine 11, threonine 12, and serine 13 each contribute to the ATP site. Threonine 11 serves as a coordination point for sn-glycerol 3-phosphate. Arginine 15 serves as a coordination point for ADP. The sn-glycerol 3-phosphate site is built by arginine 81, glutamate 82, tyrosine 133, and aspartate 242. Residues arginine 81, glutamate 82, tyrosine 133, aspartate 242, and glutamine 243 each coordinate glycerol. The ADP site is built by threonine 264 and glycine 307. 4 residues coordinate ATP: threonine 264, glycine 307, glutamine 311, and glycine 411. Glycine 411 lines the ADP pocket.

Belongs to the FGGY kinase family.

It carries out the reaction glycerol + ATP = sn-glycerol 3-phosphate + ADP + H(+). It participates in polyol metabolism; glycerol degradation via glycerol kinase pathway; sn-glycerol 3-phosphate from glycerol: step 1/1. Its activity is regulated as follows. Inhibited by fructose 1,6-bisphosphate (FBP). Its function is as follows. Key enzyme in the regulation of glycerol uptake and metabolism. Catalyzes the phosphorylation of glycerol to yield sn-glycerol 3-phosphate. This chain is Glycerol kinase, found in Rhodopseudomonas palustris (strain ATCC BAA-98 / CGA009).